A 230-amino-acid chain; its full sequence is Cytochrome c oxidase subunit 2 (230 aa).

Over 1–26 (MATPAQLGLMDAASPVMEEMIYFHDH) the chain is Mitochondrial intermembrane. Residues 27 to 48 (VMLVLILITCLIFYSMLVLISS) form a helical membrane-spanning segment. The Mitochondrial matrix segment spans residues 49 to 62 (KYIYRFLTDGHVIE). Residues 63 to 82 (TVWTVIPAIILVVVALPSLK) traverse the membrane as a helical segment. At 83 to 230 (LLYLTDELDN…GWCDMMLDEE (148 aa)) the chain is on the mitochondrial intermembrane side. His161, Cys196, Glu198, Cys200, His204, and Met207 together coordinate Cu cation. Glu198 contacts Mg(2+).

This sequence belongs to the cytochrome c oxidase subunit 2 family. In terms of assembly, component of the cytochrome c oxidase (complex IV, CIV), a multisubunit enzyme composed of a catalytic core of 3 subunits and several supernumerary subunits. The complex exists as a monomer or a dimer and forms supercomplexes (SCs) in the inner mitochondrial membrane with ubiquinol-cytochrome c oxidoreductase (cytochrome b-c1 complex, complex III, CIII). It depends on Cu cation as a cofactor.

It localises to the mitochondrion inner membrane. It carries out the reaction 4 Fe(II)-[cytochrome c] + O2 + 8 H(+)(in) = 4 Fe(III)-[cytochrome c] + 2 H2O + 4 H(+)(out). Its function is as follows. Component of the cytochrome c oxidase, the last enzyme in the mitochondrial electron transport chain which drives oxidative phosphorylation. The respiratory chain contains 3 multisubunit complexes succinate dehydrogenase (complex II, CII), ubiquinol-cytochrome c oxidoreductase (cytochrome b-c1 complex, complex III, CIII) and cytochrome c oxidase (complex IV, CIV), that cooperate to transfer electrons derived from NADH and succinate to molecular oxygen, creating an electrochemical gradient over the inner membrane that drives transmembrane transport and the ATP synthase. Cytochrome c oxidase is the component of the respiratory chain that catalyzes the reduction of oxygen to water. Electrons originating from reduced cytochrome c in the intermembrane space (IMS) are transferred via the dinuclear copper A center (CU(A)) of subunit 2 and heme A of subunit 1 to the active site in subunit 1, a binuclear center (BNC) formed by heme A3 and copper B (CU(B)). The BNC reduces molecular oxygen to 2 water molecules using 4 electrons from cytochrome c in the IMS and 4 protons from the mitochondrial matrix. The sequence is that of Cytochrome c oxidase subunit 2 (COII) from Branchiostoma floridae (Florida lancelet).